The following is a 430-amino-acid chain: Serine--tRNA ligase (430 aa).

237–239 (TAE) contributes to the L-serine binding site. 268–270 (RAE) contributes to the ATP binding site. Residue E291 coordinates L-serine. 355 to 358 (EISS) is a binding site for ATP. S391 contributes to the L-serine binding site.

It belongs to the class-II aminoacyl-tRNA synthetase family. Type-1 seryl-tRNA synthetase subfamily. Homodimer. The tRNA molecule binds across the dimer.

It localises to the cytoplasm. It catalyses the reaction tRNA(Ser) + L-serine + ATP = L-seryl-tRNA(Ser) + AMP + diphosphate + H(+). The catalysed reaction is tRNA(Sec) + L-serine + ATP = L-seryl-tRNA(Sec) + AMP + diphosphate + H(+). It functions in the pathway aminoacyl-tRNA biosynthesis; selenocysteinyl-tRNA(Sec) biosynthesis; L-seryl-tRNA(Sec) from L-serine and tRNA(Sec): step 1/1. Catalyzes the attachment of serine to tRNA(Ser). Is also able to aminoacylate tRNA(Sec) with serine, to form the misacylated tRNA L-seryl-tRNA(Sec), which will be further converted into selenocysteinyl-tRNA(Sec). The chain is Serine--tRNA ligase from Serratia proteamaculans (strain 568).